The sequence spans 144 residues: HTH-type transcriptional regulator LrpC (144 aa).

The 62-residue stretch at L3–P64 folds into the HTH asnC-type domain. A DNA-binding region (H-T-H motif) is located at residues M22–R41.

Functionally, transcriptional regulator with a possible role in regulation of amino acid metabolism. Plays a role in the growth phase transition. The chain is HTH-type transcriptional regulator LrpC (lrpC) from Bacillus subtilis (strain 168).